A 427-amino-acid polypeptide reads, in one-letter code: 3-phosphoshikimate 1-carboxyvinyltransferase (427 aa).

3-phosphoshikimate-binding residues include K22, S23, and R27. Residue K22 coordinates phosphoenolpyruvate. Residues G96 and R124 each coordinate phosphoenolpyruvate. S170, S171, Q172, S199, D313, N336, and K340 together coordinate 3-phosphoshikimate. Position 172 (Q172) interacts with phosphoenolpyruvate. D313 functions as the Proton acceptor in the catalytic mechanism. 3 residues coordinate phosphoenolpyruvate: R344, R386, and K411.

This sequence belongs to the EPSP synthase family. Monomer.

It localises to the cytoplasm. It carries out the reaction 3-phosphoshikimate + phosphoenolpyruvate = 5-O-(1-carboxyvinyl)-3-phosphoshikimate + phosphate. Its pathway is metabolic intermediate biosynthesis; chorismate biosynthesis; chorismate from D-erythrose 4-phosphate and phosphoenolpyruvate: step 6/7. In terms of biological role, catalyzes the transfer of the enolpyruvyl moiety of phosphoenolpyruvate (PEP) to the 5-hydroxyl of shikimate-3-phosphate (S3P) to produce enolpyruvyl shikimate-3-phosphate and inorganic phosphate. The chain is 3-phosphoshikimate 1-carboxyvinyltransferase from Aeromonas salmonicida.